The sequence spans 253 residues: HTH-type transcriptional regulator YdeO (253 aa).

An HTH araC/xylS-type domain is found at 137–233 (GKVRNIVNMK…GNSPKRVSKE (97 aa)). 2 DNA-binding regions (H-T-H motif) span residues 154–175 (KDICDCLYISESLLKKKLKQEQ) and 200–223 (VNKIAEQCGYASTSYFIYAFRKHF).

Functionally, induces the expression of gadE and mdtEF. Could also regulate the expression of other genes involved in acid resistance. The protein is HTH-type transcriptional regulator YdeO (ydeO) of Escherichia coli (strain K12).